Consider the following 493-residue polypeptide: Cell division protein FtsA (493 aa).

Residues Ala434–Asp468 are disordered. Polar residues predominate over residues Gln436–Ala465.

It belongs to the FtsA/MreB family. Self-interacts. Interacts with FtsZ.

It localises to the cell inner membrane. In terms of biological role, cell division protein that is involved in the assembly of the Z ring. May serve as a membrane anchor for the Z ring. This is Cell division protein FtsA from Helicobacter pylori (strain J99 / ATCC 700824) (Campylobacter pylori J99).